Consider the following 188-residue polypeptide: Methylated-DNA--protein-cysteine methyltransferase (188 aa).

3 residues coordinate DNA: Tyr-120, Gly-121, and Arg-134. Cys-151 (nucleophile; methyl group acceptor) is an active-site residue. Ser-157 provides a ligand contact to DNA.

This sequence belongs to the MGMT family.

The protein localises to the nucleus. It carries out the reaction a 6-O-methyl-2'-deoxyguanosine in DNA + L-cysteinyl-[protein] = S-methyl-L-cysteinyl-[protein] + a 2'-deoxyguanosine in DNA. The catalysed reaction is a 4-O-methyl-thymidine in DNA + L-cysteinyl-[protein] = a thymidine in DNA + S-methyl-L-cysteinyl-[protein]. Functionally, involved in the cellular defense against the biological effects of O6-methylguanine (O6-MeG) and O4-methylthymine (O4-MeT) in DNA. Repairs the methylated nucleobase in DNA by stoichiometrically transferring the methyl group to a cysteine residue in the enzyme. This is a suicide reaction: the enzyme is irreversibly inactivated. Prefers double-stranded DNA over single-stranded DNA as substrate. This Saccharomyces cerevisiae (strain YJM789) (Baker's yeast) protein is Methylated-DNA--protein-cysteine methyltransferase (MGT1).